The chain runs to 180 residues: MTLKELVVGFGTQVRSLWMIGLHAFAKRETKMYPEEPVYLPPRYRGRIVLTRDPDGAERCVACNLCAVACPVGCISLQKAETEDGRWYPEFFRINFSRCIFCGMCEEACPTTALQLTPDFEMGEFRRQDLVYEKEDLLISGPGKYPDYNFYRMAGMAIDGKAKGEAENEAKPIDVKGLLP.

4Fe-4S ferredoxin-type domains follow at residues 48 to 80 and 90 to 119; these read IVLT…LQKA and EFFR…LTPD. 8 residues coordinate [4Fe-4S] cluster: Cys60, Cys63, Cys66, Cys70, Cys99, Cys102, Cys105, and Cys109.

The protein belongs to the complex I 23 kDa subunit family. As to quaternary structure, NDH-1 is composed of 13 different subunits. Subunits NuoA, H, J, K, L, M, N constitute the membrane sector of the complex. [4Fe-4S] cluster is required as a cofactor.

It localises to the cell inner membrane. It catalyses the reaction a quinone + NADH + 5 H(+)(in) = a quinol + NAD(+) + 4 H(+)(out). Functionally, NDH-1 shuttles electrons from NADH, via FMN and iron-sulfur (Fe-S) centers, to quinones in the respiratory chain. The immediate electron acceptor for the enzyme in this species is believed to be ubiquinone. Couples the redox reaction to proton translocation (for every two electrons transferred, four hydrogen ions are translocated across the cytoplasmic membrane), and thus conserves the redox energy in a proton gradient. The sequence is that of NADH-quinone oxidoreductase subunit I from Edwardsiella ictaluri (strain 93-146).